The sequence spans 474 residues: Serine/threonine-protein kinase ksp1 (474 aa).

The region spanning 9-280 is the Protein kinase domain; the sequence is YKVERPLNKG…EAVLAVTKWT (272 aa). ATP is bound by residues 15-23 and lysine 43; that span reads LNKGSYGTV. Catalysis depends on aspartate 137, which acts as the Proton acceptor. Residues 345–373 form a disordered region; the sequence is VDENISTSSSPRSPASLAPVNNSERSYDS. Residues 350 to 363 show a composition bias toward low complexity; that stretch reads STSSSPRSPASLAP. 6 positions are modified to phosphoserine: serine 353, serine 354, serine 357, serine 378, serine 404, and serine 413.

The protein belongs to the protein kinase superfamily. Ser/Thr protein kinase family.

The protein localises to the cytoplasm. Its subcellular location is the nucleus. The catalysed reaction is L-seryl-[protein] + ATP = O-phospho-L-seryl-[protein] + ADP + H(+). The enzyme catalyses L-threonyl-[protein] + ATP = O-phospho-L-threonyl-[protein] + ADP + H(+). The protein is Serine/threonine-protein kinase ksp1 (ksp1) of Schizosaccharomyces pombe (strain 972 / ATCC 24843) (Fission yeast).